We begin with the raw amino-acid sequence, 165 residues long: Pro-MCH (165 aa).

The first 21 residues, 1–21 (MAKMSLSSYLLILTFSLFSQG), serve as a signal peptide directing secretion. The tract at residues 68–88 (NDDSSFMNDEENKNSKNTGSK) is disordered. I143 carries the post-translational modification Isoleucine amide. C153 and C162 are oxidised to a cystine.

This sequence belongs to the melanin-concentrating hormone family. In terms of processing, pro-MCH is processed differentially in the brain and in peripheral organs producing two neuropeptides; NEI and MCH. A third peptide, NGE, may also be produced. Preferential processing in neurons by prohormone convertase 2 (PC2) generates NEI. MCH is generated in neurons of the lateral hypothalmic area by several prohormone convertases including PC1/3, PC2 and PC5/6.

It is found in the secreted. Functionally, MCH may act as a neurotransmitter or neuromodulator in a broad array of neuronal functions directed toward the regulation of goal-directed behavior, such as food intake, and general arousal. This Canis lupus familiaris (Dog) protein is Pro-MCH (PMCH).